The following is a 298-amino-acid chain: Arginine/serine-rich protein 1 (298 aa).

The segment at 1–135 (MSSAAMSKYV…SRSRSRGRSQ (135 aa)) is disordered. The residue at position 17 (Ser-17) is a Phosphoserine. Low complexity predominate over residues 23–36 (SPSTSGSGRSSRLS). Residues 60–105 (SRSHSRPRRSRRSRSRSRRRHQRKYRRYSRSYSRSRSRSRSHRYHR) show a composition bias toward basic residues. 2 positions are modified to phosphoserine: Ser-118 and Ser-120. Positions 124–135 (SRSRSRSRGRSQ) are enriched in basic residues. Arg-145 carries the post-translational modification Omega-N-methylarginine. Disordered stretches follow at residues 161–181 (RPRWRERSRTRSRSRSRTPFR) and 218–298 (ASQG…WIPV). Polar residues predominate over residues 219–228 (SQGTAVSSSG). The span at 230–246 (KVEHSEKQTEDATKNTS) shows a compositional bias: basic and acidic residues. The span at 247–271 (EKSSTQRNIAFSSNNSVAKPLQKTT) shows a compositional bias: polar residues. Residues 274-289 (AVEEKSSGSPKIDKKK) show a composition bias toward basic and acidic residues. At Ser-282 the chain carries Phosphoserine.

Belongs to the RSRP family. In terms of processing, phosphorylated. Phosphorylation at Ser-118 and Ser-120 mediates the interaction with spliceosome proteins.

The protein resides in the nucleus. Its function is as follows. Probably acts as a spliceosomal factor that contributes to spliceosome assembly and regulates the isoform switching of proteins such as PARP6. The chain is Arginine/serine-rich protein 1 (Rsrp1) from Mus musculus (Mouse).